Reading from the N-terminus, the 91-residue chain is Small integral membrane protein 12-B (91 aa).

A helical membrane pass occupies residues 12–34 (YAPYITFPVAFVVGAVGYQLEWF).

This sequence belongs to the SMIM12 family.

It localises to the membrane. The sequence is that of Small integral membrane protein 12-B (smim12-b) from Xenopus laevis (African clawed frog).